The primary structure comprises 430 residues: Cortical fragment-lytic enzyme (430 aa).

LysM domains lie at 3–47 and 52–96; these read QIVT…ALIV and NNYY…QLYV. The GH18 domain maps to 104–430; sequence VESIAYLQPS…VENFTITKKG (327 aa). The active-site Proton donor is the glutamate 219.

Belongs to the glycosyl hydrolase 18 family. Chitinase class II subfamily.

It is found in the spore cortex. With respect to regulation, inhibited by diethylpyrocarbonate. In terms of biological role, N-acetylglucosaminidase involved in cortex peptidoglycan degradation during germination. Cleaves only partially degraded spore peptidoglycans. Recognizes muramic acid delta-lactam residues specific to spore peptidoglycans. The protein is Cortical fragment-lytic enzyme of Bacillus cereus.